Here is a 516-residue protein sequence, read N- to C-terminus: Radial spoke head protein 3 homolog A (516 aa).

3 disordered regions span residues 1–45, 120–139, and 190–233; these read MAAT…GNPA, STLNQASAMTDPNPRTAEAS, and PTGQ…PVEG. A compositionally biased stretch (basic residues) spans 12–25; the sequence is AKKRPLHQRARRPA. The segment covering 120 to 129 has biased composition (polar residues); it reads STLNQASAMT. Over residues 208–217 the composition is skewed to basic residues; the sequence is QARRRALARK. Basic and acidic residues predominate over residues 218–233; that stretch reads RAQEQLKPRTPEPVEG. At Thr-270 the chain carries Phosphothreonine; by MAPK1. A coiled-coil region spans residues 333 to 369; it reads YEEIRNVELAEVQRLEEQERRHREEKERRKKQQWEIV. Residues 459 to 516 form a disordered region; it reads EAMPPGQKTNVINGPNTVTDPSVTTLHTQKPVLDRVSSQPAPSQERKPVEEGGHLMAE. Positions 465–486 are enriched in polar residues; that stretch reads QKTNVINGPNTVTDPSVTTLHT. The span at 502-516 shows a compositional bias: basic and acidic residues; that stretch reads QERKPVEEGGHLMAE.

The protein belongs to the flagellar radial spoke RSP3 family. May be a component of axonemal radial spokes. Interacts with IQUB. Interacts with phosphorylated MAPK1. Interacts with MEK1. Interacts with PKA regulatory subunits PRKAR1A and PRKAR1B. Interacts with RSPH1. Interacts with RSPH4A. Interacts with RSPH6A. Interacts with RSPH9. Interacts with CFAP61. Interacts with LRRC23.

Its subcellular location is the cytoplasm. The protein resides in the cytoskeleton. It localises to the cilium axoneme. The protein localises to the flagellum axoneme. Its function is as follows. May function as part of axonemal radial spoke complexes that play an important part in the motility of sperm and cilia. Functions as a protein kinase A-anchoring protein that scaffolds the cAMP-dependent protein kinase holoenzyme. May serve as a point of convergence for MAPK and PKA signaling in cilia. The protein is Radial spoke head protein 3 homolog A (Rsph3a) of Mus musculus (Mouse).